The following is a 791-amino-acid chain: Endonuclease MutS2 (791 aa).

ATP is bound at residue glycine 339–threonine 346. The 76-residue stretch at leucine 715 to lysine 790 folds into the Smr domain.

Belongs to the DNA mismatch repair MutS family. MutS2 subfamily. In terms of assembly, homodimer. Binds to stalled ribosomes, contacting rRNA.

Its function is as follows. Endonuclease that is involved in the suppression of homologous recombination and thus may have a key role in the control of bacterial genetic diversity. Functionally, acts as a ribosome collision sensor, splitting the ribosome into its 2 subunits. Detects stalled/collided 70S ribosomes which it binds and splits by an ATP-hydrolysis driven conformational change. Acts upstream of the ribosome quality control system (RQC), a ribosome-associated complex that mediates the extraction of incompletely synthesized nascent chains from stalled ribosomes and their subsequent degradation. Probably generates substrates for RQC. This chain is Endonuclease MutS2, found in Halothermothrix orenii (strain H 168 / OCM 544 / DSM 9562).